The chain runs to 295 residues: Glycine N-acyltransferase-like protein Keg1 (295 aa).

Position 41 is an N6-acetyllysine; alternate (lysine 41). The residue at position 41 (lysine 41) is an N6-succinyllysine; alternate. At lysine 43 the chain carries N6-acetyllysine. Lysine 48 carries the N6-acetyllysine; alternate modification. Lysine 48 bears the N6-succinyllysine; alternate mark. 2 positions are modified to N6-acetyllysine: lysine 80 and lysine 83. 3 positions are modified to N6-acetyllysine; alternate: lysine 124, lysine 128, and lysine 140. An N6-succinyllysine; alternate mark is found at lysine 124, lysine 128, and lysine 140. Lysine 150 carries the N6-acetyllysine modification. Lysine 255 is subject to N6-acetyllysine; alternate. The residue at position 255 (lysine 255) is an N6-succinyllysine; alternate.

Belongs to the glycine N-acyltransferase family. In terms of assembly, binds to microtubules.

The protein resides in the cytoplasm. Its subcellular location is the cytoskeleton. It localises to the microtubule organizing center. The protein localises to the centrosome. The enzyme catalyses an acyl-CoA + glycine = an N-acylglycine + CoA + H(+). Acyltransferase which transfers the acyl group to the N-terminus of glycine. Can conjugate a multitude of substrates to form a variety of N-acylglycines. In Mus musculus (Mouse), this protein is Glycine N-acyltransferase-like protein Keg1 (Keg1).